Consider the following 502-residue polypeptide: ATP synthase subunit alpha (502 aa).

169–176 contacts ATP; sequence GDRQTGKT.

It belongs to the ATPase alpha/beta chains family. F-type ATPases have 2 components, CF(1) - the catalytic core - and CF(0) - the membrane proton channel. CF(1) has five subunits: alpha(3), beta(3), gamma(1), delta(1), epsilon(1). CF(0) has three main subunits: a(1), b(2) and c(9-12). The alpha and beta chains form an alternating ring which encloses part of the gamma chain. CF(1) is attached to CF(0) by a central stalk formed by the gamma and epsilon chains, while a peripheral stalk is formed by the delta and b chains.

The protein localises to the cell membrane. It carries out the reaction ATP + H2O + 4 H(+)(in) = ADP + phosphate + 5 H(+)(out). Produces ATP from ADP in the presence of a proton gradient across the membrane. The alpha chain is a regulatory subunit. This is ATP synthase subunit alpha from Exiguobacterium sp. (strain ATCC BAA-1283 / AT1b).